A 121-amino-acid chain; its full sequence is Small ribosomal subunit protein uS13 (121 aa).

Residues 94 to 121 (SLPVRGQNTKNNSRTRKGPRRTVANKKK) form a disordered region. A compositionally biased stretch (basic residues) spans 106–121 (SRTRKGPRRTVANKKK).

The protein belongs to the universal ribosomal protein uS13 family. Part of the 30S ribosomal subunit. Forms a loose heterodimer with protein S19. Forms two bridges to the 50S subunit in the 70S ribosome.

In terms of biological role, located at the top of the head of the 30S subunit, it contacts several helices of the 16S rRNA. In the 70S ribosome it contacts the 23S rRNA (bridge B1a) and protein L5 of the 50S subunit (bridge B1b), connecting the 2 subunits; these bridges are implicated in subunit movement. Contacts the tRNAs in the A and P-sites. This chain is Small ribosomal subunit protein uS13, found in Exiguobacterium sp. (strain ATCC BAA-1283 / AT1b).